A 353-amino-acid chain; its full sequence is CCN family member 3 (353 aa).

The N-terminal stretch at 1 to 26 (MEPGGGHSLPVLLLLLLLLLLRPSEV) is a signal peptide. Residues 29 to 103 (REAPCPRPCG…GGGTGICMVL (75 aa)) enclose the IGFBP N-terminal domain. Intrachain disulfides connect cysteine 33–cysteine 59, cysteine 37–cysteine 61, cysteine 41–cysteine 62, cysteine 48–cysteine 65, cysteine 73–cysteine 87, and cysteine 79–cysteine 100. The region spanning 106–172 (DNCVFDGMIY…GECCEKWVCE (67 aa)) is the VWFC domain. The TSP type-1 domain maps to 203 to 248 (NCIEQTTEWSACSRSCGMGFSTRVTNRNQQCEMVKQTRLCMMRPCE). 5 cysteine pairs are disulfide-bonded: cysteine 260/cysteine 297, cysteine 277/cysteine 311, cysteine 288/cysteine 327, cysteine 291/cysteine 329, and cysteine 296/cysteine 333. Positions 260–334 (CIRTKKSMKA…NTCVCHGNCP (75 aa)) constitute a CTCK domain. A glycan (N-linked (GlcNAc...) asparagine) is linked at asparagine 276.

The protein belongs to the CCN family.

The protein resides in the secreted. It is found in the cytoplasm. Its subcellular location is the cell junction. It localises to the gap junction. Its function is as follows. Immediate-early protein likely to play a role in cell growth regulation. The sequence is that of CCN family member 3 (CCN3) from Coturnix japonica (Japanese quail).